We begin with the raw amino-acid sequence, 442 residues long: Ankyrin repeat and MYND domain-containing protein 2 (442 aa).

ANK repeat units lie at residues 45–74 (NGMTPLMHAAYKGKLDMCKLLLRHGADVNC), 79–108 (HGYTALMFAALSGNKDITWVMLEAGAETDV), and 159–188 (KLAGPLHKIITTTNLHPVKIVMLINENPLL). C320, C323, C332, C335, C341, C345, H353, and C357 together coordinate Zn(2+). Residues 320–357 (CTTCGEKGASKRCSVCKMVIYCDQTCQKTHWFAHKKIC) form an MYND-type zinc finger. The segment covering 401–421 (TRICQKNDNPKDSEEGEKESL) has biased composition (basic and acidic residues). The disordered stretch occupies residues 401–442 (TRICQKNDNPKDSEEGEKESLQSDAGLEGLQEAAVGPQVSEE).

Interacts with the retinal-specific guanylyl cyclase GC1.

It localises to the cell projection. The protein localises to the cilium. May be involved in the trafficking of signaling proteins to the cilia. In Bos taurus (Bovine), this protein is Ankyrin repeat and MYND domain-containing protein 2 (ANKMY2).